The following is a 478-amino-acid chain: Septin-4 (478 aa).

The disordered stretch occupies residues 38 to 115 (VKDFSGNESC…RSPWGKLDPY (78 aa)). The segment covering 95-108 (APAPLSPSARPRSP) has biased composition (low complexity). 2 positions are modified to phosphoserine: S117 and S118. Residues 141–414 (KGFDFTLMVA…ENYRAQCIQS (274 aa)) form the Septin-type G domain. The G1 motif stretch occupies residues 151 to 158 (GESGLGKS). GTP is bound by residues 151-158 (GESGLGKS) and T185. Positions 208-211 (DTPG) are G3 motif. The segment at 289–292 (AKAD) is G4 motif. 290–298 (KADTLTPPE) contributes to the GTP binding site. Position 325 is a phosphoserine (S325). GTP is bound by residues G348 and R363. Residues 425–448 (RNKLTRESGTDLPIPAVPPGTDPE) are disordered. S432 is subject to Phosphoserine. T434 carries the phosphothreonine modification. Residues 446-478 (DPETEKLIREKDEELRRMQEMLHKIQKQMKETY) adopt a coiled-coil conformation.

The protein belongs to the TRAFAC class TrmE-Era-EngA-EngB-Septin-like GTPase superfamily. Septin GTPase family. As to quaternary structure, septins polymerize into heterooligomeric protein complexes that form filaments, and can associate with cellular membranes, actin filaments and microtubules. GTPase activity is required for filament formation. Interacts with SEPTIN8. Component of a septin core octameric complex consisting of SEPTIN12, SEPTIN7, SEPTIN6 and SEPTIN2 or SEPTIN4 in the order 12-7-6-2-2-6-7-12 or 12-7-6-4-4-6-7-12. Interacts with SEPTIN14 (via C-terminus). Interacts with DYRK1A. Interacts with SLC6A3/DAT and SNCA/alpha-synuclein. Interacts with STX1A; in the striatum. Interacts with XIAP (via BIR3 domain) following the induction of apoptosis. Interacts with AREL1 (via HECT domain); in the cytoplasm following induction of apoptosis. Post-translationally, ubiquitinated by AREL1. In terms of processing, phosphorylated by DYRK1A.

It is found in the cytoplasm. The protein resides in the cell projection. It localises to the cilium. The protein localises to the flagellum. Its subcellular location is the cytoplasmic vesicle. It is found in the secretory vesicle. The protein resides in the axon. It localises to the dendrite. The protein localises to the perikaryon. Its subcellular location is the synapse. Filament-forming cytoskeletal GTPase. Pro-apoptotic protein involved in LGR5-positive intestinal stem cell and Paneth cell expansion in the intestines, via its interaction with XIAP. May also play a role in the regulation of cell fate in the intestine. Positive regulator of apoptosis involved in hematopoietic stem cell homeostasis; via its interaction with XIAP. Negative regulator of repair and hair follicle regeneration in response to injury, due to inhibition of hair follicle stem cell proliferation, potentially via its interaction with XIAP. Plays an important role in male fertility and sperm motility. During spermiogenesis, essential for the establishment of the annulus (a fibrous ring structure connecting the midpiece and the principal piece of the sperm flagellum) which is a requisite for the structural and mechanical integrity of the sperm. Involved in the migration of cortical neurons and the formation of neuron leading processes during embryonic development. Required for dopaminergic metabolism in presynaptic autoreceptors; potentially via activity as a presynaptic scaffold protein. This Pongo abelii (Sumatran orangutan) protein is Septin-4.